The sequence spans 827 residues: Cell surface glycoprotein (827 aa).

Positions 1-34 (MTKLKDQTRAILLATLMVTSVFAGAIAFTGSAAA) are cleaved as a signal peptide. Asn47 is a glycosylation site (N-linked (Glc...) asparagine). Polar residues predominate over residues 73-102 (PLLTGTAGNSEGVSLDLSSPIPQTTENQPL). The interval 73 to 111 (PLLTGTAGNSEGVSLDLSSPIPQTTENQPLGTYDVDGSG) is disordered. N-linked (Glc...) asparagine glycosylation is found at Asn117, Asn308, Asn313, Asn532, and Asn766. The disordered stretch occupies residues 755-804 (SEREDTTTSSDNATDTTTTTDGPTETTTTAEPTETTEEPTEETTTSSNTP). The span at 761–787 (TTSSDNATDTTTTTDGPTETTTTAEPT) shows a compositional bias: low complexity. A PGF sorting signal motif is present at residues 804–806 (PGF). The helical transmembrane segment at 804 to 823 (PGFGIAVALVALVGAALLAL) threads the bilayer.

It belongs to the halobacterial S-layer protein family. Post-translationally, O-glycosylated on 4 to 6 threonine residues; glycans consist of Glc-Gal disaccharides. In terms of processing, the N-terminus is not blocked. Cleaved by the archaeosortase ArtA at the C-terminus, with removal of a short hydrophobic segment. Post-translationally, lipidation: Following protein translocation across the membrane, the protein is modified by a derivative of mevalonic acid. Lipid modification is ArtA-dependent and requires the conserved C-terminal PGF motif. In terms of processing, asn-47 and Asn-117 are glycosylated by a pentasaccharide comprising a hexose, 2 hexuronic acids, a methyl ester of a hexuronic acid and mannose. The pentasaccharide is produced in 2 steps: first, a tetrasaccharide is built on dolichol-P and then transferred to the S-layer glycoprotein. Then, the mannose fifth sugar is attached to a distinct molecule of dolichol-P and is transferred to the protein already carrying the tetrasaccharide. The pentasaccharide on Asn-47 was initially thought to contain mannose, galactose, glucose and idose with a relative ratio of 1/3/3/0.2. However, it was later shown that it is not the case. Under low-salt conditions (1.75 M instead of 3.4 M), a tetrasaccharide consisting of a sulfated hexose, 2 hexoses and rhamnose is attached to Asn-532.

It localises to the secreted. It is found in the cell wall. The protein localises to the S-layer. The protein resides in the cell membrane. Functionally, S-layer protein. The S-layer is a paracrystalline mono-layered assembly of proteins which coat the surface of the cell. The protein is Cell surface glycoprotein (csg) of Haloferax volcanii (strain ATCC 29605 / DSM 3757 / JCM 8879 / NBRC 14742 / NCIMB 2012 / VKM B-1768 / DS2) (Halobacterium volcanii).